The following is a 142-amino-acid chain: MAAMTVHLDIVSAESKIFSGRVVSLQVTGSEGELGIMHGHAPLLSYIKPGMARIVKQDGSEEVFYLSGGILEVQPSTVSVLADVVMRAKDIDEQAALEAKRRAEAHMANAGADFNYDAAMVELAKAMAQLRVVETIKKNIAR.

The protein belongs to the ATPase epsilon chain family. As to quaternary structure, F-type ATPases have 2 components, CF(1) - the catalytic core - and CF(0) - the membrane proton channel. CF(1) has five subunits: alpha(3), beta(3), gamma(1), delta(1), epsilon(1). CF(0) has three main subunits: a, b and c.

The protein localises to the cell inner membrane. Functionally, produces ATP from ADP in the presence of a proton gradient across the membrane. The protein is ATP synthase epsilon chain of Shewanella baltica (strain OS155 / ATCC BAA-1091).